Reading from the N-terminus, the 144-residue chain is Large ribosomal subunit protein uL16 (144 aa).

Basic residues predominate over residues 1–16 (MLIPKRVKYRKQHRGR). The tract at residues 1 to 23 (MLIPKRVKYRKQHRGRPGGGMAK) is disordered.

Belongs to the universal ribosomal protein uL16 family. Part of the 50S ribosomal subunit.

Functionally, binds 23S rRNA and is also seen to make contacts with the A and possibly P site tRNAs. The polypeptide is Large ribosomal subunit protein uL16 (Pelotomaculum thermopropionicum (strain DSM 13744 / JCM 10971 / SI)).